The sequence spans 482 residues: Succinate-semialdehyde dehydrogenase [NADP(+)] GabD (482 aa).

NADP(+)-binding positions include 156-157 (WN), 180-183 (KPAS), and 233-234 (GS). The active-site Proton acceptor is the Glu-255. Position 256 (Leu-256) interacts with NADP(+). Catalysis depends on Cys-289, which acts as the Nucleophile. Glu-386 is a binding site for NADP(+).

Belongs to the aldehyde dehydrogenase family. Homotetramer.

It catalyses the reaction succinate semialdehyde + NADP(+) + H2O = succinate + NADPH + 2 H(+). It carries out the reaction 5-oxopentanoate + NADP(+) + H2O = glutarate + NADPH + 2 H(+). It participates in amino-acid degradation; 4-aminobutanoate degradation. Its pathway is amino-acid degradation. Its function is as follows. Catalyzes the NADP(+)-dependent oxidation of succinate semialdehyde to succinate. Thereby functions in a GABA degradation pathway that allows some E.coli strains to utilize GABA as a nitrogen source for growth. Also catalyzes the conversion of glutarate semialdehyde to glutarate, as part of a L-lysine degradation pathway that proceeds via cadaverine, glutarate and L-2-hydroxyglutarate. The sequence is that of Succinate-semialdehyde dehydrogenase [NADP(+)] GabD (gabD) from Escherichia coli (strain K12).